A 171-amino-acid polypeptide reads, in one-letter code: S-ribosylhomocysteine lyase (171 aa).

Fe cation contacts are provided by H54, H58, and C128.

Belongs to the LuxS family. In terms of assembly, homodimer. The cofactor is Fe cation.

The catalysed reaction is S-(5-deoxy-D-ribos-5-yl)-L-homocysteine = (S)-4,5-dihydroxypentane-2,3-dione + L-homocysteine. Involved in the synthesis of autoinducer 2 (AI-2) which is secreted by bacteria and is used to communicate both the cell density and the metabolic potential of the environment. The regulation of gene expression in response to changes in cell density is called quorum sensing. Catalyzes the transformation of S-ribosylhomocysteine (RHC) to homocysteine (HC) and 4,5-dihydroxy-2,3-pentadione (DPD). The sequence is that of S-ribosylhomocysteine lyase from Shigella flexneri.